We begin with the raw amino-acid sequence, 380 residues long: Omega-3 fatty acid desaturase, endoplasmic reticulum (380 aa).

A helical membrane pass occupies residues 59–78; it reads VLVVTALAASAISFNSWFFW. The Histidine box-1 signature appears at 97 to 101; it reads HDCGH. Residues 133 to 137 carry the Histidine box-2 motif; the sequence is HRTHH. The next 2 helical transmembrane spans lie at 208 to 231 and 238 to 256; these read GVVT…LTIG and LYGV…VTYL. Residues 300–304 carry the Histidine box-3 motif; sequence HVIHH.

Belongs to the fatty acid desaturase type 1 family.

Its subcellular location is the endoplasmic reticulum membrane. The protein operates within lipid metabolism; polyunsaturated fatty acid biosynthesis. In terms of biological role, microsomal (ER) omega-3 fatty acid desaturase introduces the third double bond in the biosynthesis of 18:3 fatty acids, important constituents of plant membranes. It is thought to use cytochrome b5 as an electron donor and to act on fatty acids esterified to phosphatidylcholine and, possibly, other phospholipids. The polypeptide is Omega-3 fatty acid desaturase, endoplasmic reticulum (ARG1) (Vigna radiata var. radiata (Mung bean)).